The following is a 272-amino-acid chain: Acetylglutamate kinase (272 aa).

Substrate-binding positions include 46–47 (GA), Arg68, and Asn166.

The protein belongs to the acetylglutamate kinase family. ArgB subfamily.

It is found in the cytoplasm. It carries out the reaction N-acetyl-L-glutamate + ATP = N-acetyl-L-glutamyl 5-phosphate + ADP. It participates in amino-acid biosynthesis; L-arginine biosynthesis; N(2)-acetyl-L-ornithine from L-glutamate: step 2/4. In terms of biological role, catalyzes the ATP-dependent phosphorylation of N-acetyl-L-glutamate. In Dehalococcoides mccartyi (strain ATCC BAA-2100 / JCM 16839 / KCTC 5957 / BAV1), this protein is Acetylglutamate kinase.